A 173-amino-acid chain; its full sequence is MGTPCHYALFDLQPSFRLDLDKLATRYRELAREVHPDRFADASEREQRVALEKSAALNDAYQTLRSAPRRARYLLAISGHEVPQEVTVHDPDFLLQQMQWREELEELQDEADLDGVGVFKKRLKAAQDTLNEDFAGCWDAPGERDKAERLMRRMQFLDKLAQEVRQLEERLDD.

The 73-residue stretch at Cys5–Ile77 folds into the J domain.

It belongs to the HscB family. As to quaternary structure, interacts with HscA and stimulates its ATPase activity.

In terms of biological role, co-chaperone involved in the maturation of iron-sulfur cluster-containing proteins. Seems to help targeting proteins to be folded toward HscA. The polypeptide is Co-chaperone protein HscB homolog (Pseudomonas putida (strain ATCC 700007 / DSM 6899 / JCM 31910 / BCRC 17059 / LMG 24140 / F1)).